The chain runs to 423 residues: UDP-N-acetylglucosamine 1-carboxyvinyltransferase 1 (423 aa).

24–25 contacts phosphoenolpyruvate; sequence KN. Arginine 94 is a UDP-N-acetyl-alpha-D-glucosamine binding site. Catalysis depends on cysteine 118, which acts as the Proton donor. Cysteine 118 carries the post-translational modification 2-(S-cysteinyl)pyruvic acid O-phosphothioketal. UDP-N-acetyl-alpha-D-glucosamine contacts are provided by residues 123-127, aspartate 309, and isoleucine 331; that span reads RPIDQ.

It belongs to the EPSP synthase family. MurA subfamily.

The protein localises to the cytoplasm. The catalysed reaction is phosphoenolpyruvate + UDP-N-acetyl-alpha-D-glucosamine = UDP-N-acetyl-3-O-(1-carboxyvinyl)-alpha-D-glucosamine + phosphate. It participates in cell wall biogenesis; peptidoglycan biosynthesis. Functionally, cell wall formation. Adds enolpyruvyl to UDP-N-acetylglucosamine. This is UDP-N-acetylglucosamine 1-carboxyvinyltransferase 1 from Staphylococcus haemolyticus (strain JCSC1435).